Reading from the N-terminus, the 109-residue chain is Nucleoid-associated protein Spea_1509 (109 aa).

Residues 87–109 (NQKEKMAEVTGGMQLPPGMKMPF) form a disordered region.

The protein belongs to the YbaB/EbfC family. As to quaternary structure, homodimer.

It localises to the cytoplasm. The protein resides in the nucleoid. Binds to DNA and alters its conformation. May be involved in regulation of gene expression, nucleoid organization and DNA protection. The protein is Nucleoid-associated protein Spea_1509 of Shewanella pealeana (strain ATCC 700345 / ANG-SQ1).